Here is a 210-residue protein sequence, read N- to C-terminus: NAD(P)H-quinone oxidoreductase subunit I (210 aa).

4Fe-4S ferredoxin-type domains follow at residues 54 to 83 and 94 to 123; these read GRIHFEFDKCIACEICVRVCPIDLPVVDWV and YSYSIDFGVCIFCANCVEFCPTNCLSVTED. [4Fe-4S] cluster is bound by residues Cys-63, Cys-66, Cys-69, Cys-73, Cys-103, Cys-106, Cys-109, and Cys-113.

The protein belongs to the complex I 23 kDa subunit family. In terms of assembly, NDH-1 is composed of at least 11 different subunits. Requires [4Fe-4S] cluster as cofactor.

It localises to the cellular thylakoid membrane. The enzyme catalyses a plastoquinone + NADH + (n+1) H(+)(in) = a plastoquinol + NAD(+) + n H(+)(out). It carries out the reaction a plastoquinone + NADPH + (n+1) H(+)(in) = a plastoquinol + NADP(+) + n H(+)(out). In terms of biological role, NDH-1 shuttles electrons from an unknown electron donor, via FMN and iron-sulfur (Fe-S) centers, to quinones in the respiratory and/or the photosynthetic chain. The immediate electron acceptor for the enzyme in this species is believed to be plastoquinone. Couples the redox reaction to proton translocation, and thus conserves the redox energy in a proton gradient. This Synechococcus sp. (strain JA-3-3Ab) (Cyanobacteria bacterium Yellowstone A-Prime) protein is NAD(P)H-quinone oxidoreductase subunit I.